We begin with the raw amino-acid sequence, 487 residues long: MTSLDQFVTAVIASPSQYTELDRIYVHNRVLGLVGEGDPIAASDDQLTSLTDALVKTAIQNGKIEATQSDEDILADQLMDLVTPLPSVLNQRFWDKYQVSPQTATDYFFNLSKANDYIKTRAIAKNVVFPAKTPFGDLEITINLSKPEKDPKAIAAARNQPQDGYPLCQLCMQNEGYLGRLGYPARSNHRIIRLTLGGNTWGFQYSPYAYFNEHSIFLDQEHRPMVINRQTFTNLLEIVQQFPHYFVGSNADLPIVGGSMLSHEHYQGGRHEFPMMKAPIARTIDLGIAGVKAGIVKWPMSTIRLTSQDLVALTDAAVKIHETWKNYSDESVDVRAYTDGTRHHTTTPIARKVGDDYVLDIVLRDNQTSAEFPDGIFHPHQDVQHIKKENIGLIEVMGRAILPARLKTELAEVGKYLLDQPNQMVAMHQAWAAQLKATNTITADNVTTVIDTAVGNVFARVLADAGVFKWDDAGEAAFDRFVAAMHD.

This sequence belongs to the galactose-1-phosphate uridylyltransferase type 2 family.

The protein resides in the cytoplasm. It carries out the reaction alpha-D-galactose 1-phosphate + UDP-alpha-D-glucose = alpha-D-glucose 1-phosphate + UDP-alpha-D-galactose. The protein operates within carbohydrate metabolism; galactose metabolism. The protein is Galactose-1-phosphate uridylyltransferase of Lactiplantibacillus plantarum (strain ATCC BAA-793 / NCIMB 8826 / WCFS1) (Lactobacillus plantarum).